Reading from the N-terminus, the 945-residue chain is Bifunctional glutamine synthetase adenylyltransferase/adenylyl-removing enzyme (945 aa).

The tract at residues 1–441 (MLPLSAALQT…VFNDLIGDDS (441 aa)) is adenylyl removase. The interval 450–945 (YQHYHSLWQD…VRASWAKWLG (496 aa)) is adenylyl transferase.

The protein belongs to the GlnE family. It depends on Mg(2+) as a cofactor.

The enzyme catalyses [glutamine synthetase]-O(4)-(5'-adenylyl)-L-tyrosine + phosphate = [glutamine synthetase]-L-tyrosine + ADP. It catalyses the reaction [glutamine synthetase]-L-tyrosine + ATP = [glutamine synthetase]-O(4)-(5'-adenylyl)-L-tyrosine + diphosphate. In terms of biological role, involved in the regulation of glutamine synthetase GlnA, a key enzyme in the process to assimilate ammonia. When cellular nitrogen levels are high, the C-terminal adenylyl transferase (AT) inactivates GlnA by covalent transfer of an adenylyl group from ATP to specific tyrosine residue of GlnA, thus reducing its activity. Conversely, when nitrogen levels are low, the N-terminal adenylyl removase (AR) activates GlnA by removing the adenylyl group by phosphorolysis, increasing its activity. The regulatory region of GlnE binds the signal transduction protein PII (GlnB) which indicates the nitrogen status of the cell. The protein is Bifunctional glutamine synthetase adenylyltransferase/adenylyl-removing enzyme of Serratia proteamaculans (strain 568).